Here is a 364-residue protein sequence, read N- to C-terminus: Aminomethyltransferase (364 aa).

This sequence belongs to the GcvT family. As to quaternary structure, the glycine cleavage system is composed of four proteins: P, T, L and H.

The enzyme catalyses N(6)-[(R)-S(8)-aminomethyldihydrolipoyl]-L-lysyl-[protein] + (6S)-5,6,7,8-tetrahydrofolate = N(6)-[(R)-dihydrolipoyl]-L-lysyl-[protein] + (6R)-5,10-methylene-5,6,7,8-tetrahydrofolate + NH4(+). Functionally, the glycine cleavage system catalyzes the degradation of glycine. The polypeptide is Aminomethyltransferase (Escherichia coli O81 (strain ED1a)).